The sequence spans 116 residues: Ferredoxin-like protein in nif region (116 aa).

A 4Fe-4S ferredoxin-type domain is found at 2–29 (AYTITSQCISCKLCSSVCPTGAIKIAEN). Residues Cys-9, Cys-12, Cys-15, and Cys-19 each coordinate iron-sulfur cluster.

The protein is Ferredoxin-like protein in nif region (fdxN) of Nostoc sp. (strain PCC 7120 / SAG 25.82 / UTEX 2576).